A 365-amino-acid chain; its full sequence is Fructose-1,6-bisphosphate aldolase/phosphatase (365 aa).

The active-site Proton acceptor; for FBP phosphatase activity is the aspartate 11. Mg(2+) is bound by residues aspartate 11, histidine 18, aspartate 52, and aspartate 53. Histidine 18 serves as a coordination point for beta-D-fructose 1,6-bisphosphate. Histidine 18 contacts dihydroxyacetone phosphate. Tyrosine 90 serves as a coordination point for beta-D-fructose 1,6-bisphosphate. Position 94 (glutamine 94) interacts with Mg(2+). Residue 103 to 104 participates in beta-D-fructose 1,6-bisphosphate binding; sequence GN. Residue aspartate 131 coordinates Mg(2+). Residue lysine 132 coordinates beta-D-fructose 1,6-bisphosphate. Position 132 (lysine 132) interacts with dihydroxyacetone phosphate. Tyrosine 228 (proton donor/acceptor; for FBP aldolase activity) is an active-site residue. 3 residues coordinate Mg(2+): lysine 231, aspartate 232, and aspartate 233. Lysine 231 serves as the catalytic Schiff-base intermediate with DHAP; for FBP aldolase activity. Beta-D-fructose 1,6-bisphosphate is bound by residues 241–242, arginine 265, aspartate 286, and tyrosine 347; that span reads QS. Dihydroxyacetone phosphate contacts are provided by arginine 265 and aspartate 286.

This sequence belongs to the FBP aldolase/phosphatase family. As to quaternary structure, homooctamer; dimer of tetramers. The cofactor is Mg(2+).

The enzyme catalyses beta-D-fructose 1,6-bisphosphate + H2O = beta-D-fructose 6-phosphate + phosphate. The catalysed reaction is beta-D-fructose 1,6-bisphosphate = D-glyceraldehyde 3-phosphate + dihydroxyacetone phosphate. It functions in the pathway carbohydrate biosynthesis; gluconeogenesis. Functionally, catalyzes two subsequent steps in gluconeogenesis: the aldol condensation of dihydroxyacetone phosphate (DHAP) and glyceraldehyde-3-phosphate (GA3P) to fructose-1,6-bisphosphate (FBP), and the dephosphorylation of FBP to fructose-6-phosphate (F6P). In Methanothermobacter marburgensis (strain ATCC BAA-927 / DSM 2133 / JCM 14651 / NBRC 100331 / OCM 82 / Marburg) (Methanobacterium thermoautotrophicum), this protein is Fructose-1,6-bisphosphate aldolase/phosphatase.